The following is a 421-amino-acid chain: uncharacterized protein (421 aa).

This is an uncharacterized protein from Caenorhabditis elegans.